The chain runs to 198 residues: MPLPPSAAPDPIARFRDALARAAAASPHDATAAALATADARGAPSVRMVLVKSADARGFAFFTNRESRKARDLAANPRAALCFHWPALEEQVRVEGAVTPLPDAEADAYFRSRPRESRVGAWASRQSAPLGDRAELEAAVREVEARFPGDEIPRPPFWGGYLVAPERIEFWRSGPGRLHHRTVYVRRGDGWEVGALQP.

Residues 47-52 (RMVLVK), 62-63 (FT), arginine 68, lysine 69, and glutamine 91 each bind FMN. Lysine 52 serves as a coordination point for substrate. Residues tyrosine 109, arginine 113, and serine 117 each contribute to the substrate site. Residues 126-127 (QS) and tryptophan 171 contribute to the FMN site. 177–179 (RLH) is a binding site for substrate. Arginine 181 lines the FMN pocket.

It belongs to the pyridoxamine 5'-phosphate oxidase family. As to quaternary structure, homodimer. Requires FMN as cofactor.

The catalysed reaction is pyridoxamine 5'-phosphate + O2 + H2O = pyridoxal 5'-phosphate + H2O2 + NH4(+). It carries out the reaction pyridoxine 5'-phosphate + O2 = pyridoxal 5'-phosphate + H2O2. The protein operates within cofactor metabolism; pyridoxal 5'-phosphate salvage; pyridoxal 5'-phosphate from pyridoxamine 5'-phosphate: step 1/1. It participates in cofactor metabolism; pyridoxal 5'-phosphate salvage; pyridoxal 5'-phosphate from pyridoxine 5'-phosphate: step 1/1. Functionally, catalyzes the oxidation of either pyridoxine 5'-phosphate (PNP) or pyridoxamine 5'-phosphate (PMP) into pyridoxal 5'-phosphate (PLP). This chain is Pyridoxine/pyridoxamine 5'-phosphate oxidase, found in Anaeromyxobacter dehalogenans (strain 2CP-C).